Reading from the N-terminus, the 403-residue chain is Phosphopentomutase (403 aa).

Mn(2+) contacts are provided by Asp13, Asp298, His303, Asp339, His340, and His351.

Belongs to the phosphopentomutase family. The cofactor is Mn(2+).

It localises to the cytoplasm. The catalysed reaction is 2-deoxy-alpha-D-ribose 1-phosphate = 2-deoxy-D-ribose 5-phosphate. It carries out the reaction alpha-D-ribose 1-phosphate = D-ribose 5-phosphate. It participates in carbohydrate degradation; 2-deoxy-D-ribose 1-phosphate degradation; D-glyceraldehyde 3-phosphate and acetaldehyde from 2-deoxy-alpha-D-ribose 1-phosphate: step 1/2. Its function is as follows. Isomerase that catalyzes the conversion of deoxy-ribose 1-phosphate (dRib-1-P) and ribose 1-phosphate (Rib-1-P) to deoxy-ribose 5-phosphate (dRib-5-P) and ribose 5-phosphate (Rib-5-P), respectively. In Streptococcus pyogenes serotype M3 (strain ATCC BAA-595 / MGAS315), this protein is Phosphopentomutase.